A 184-amino-acid chain; its full sequence is C-phycoerythrin class 1 subunit beta (184 aa).

Residues Cys-50 and Cys-61 each coordinate (2R,3E)-phycoerythrobilin. N4-methylasparagine is present on Asn-72. (2R,3E)-phycoerythrobilin contacts are provided by Cys-82 and Cys-165.

Belongs to the phycobiliprotein family. In terms of assembly, heterodimer of an alpha and a beta chain. Post-translationally, contains three covalently linked bilin chromophores.

It localises to the cellular thylakoid membrane. Its function is as follows. Light-harvesting photosynthetic bile pigment-protein from the phycobiliprotein complex. In Synechococcus sp. (strain WH7803), this protein is C-phycoerythrin class 1 subunit beta (cpeB).